The primary structure comprises 399 residues: Phosphoglycerate kinase (399 aa).

Residues 22–24 (DFN), Arg-38, 61–64 (HLGR), Arg-120, and Arg-153 contribute to the substrate site. Residues Lys-204, Glu-326, and 352–355 (GGDT) each bind ATP.

Belongs to the phosphoglycerate kinase family. Monomer.

The protein localises to the cytoplasm. The catalysed reaction is (2R)-3-phosphoglycerate + ATP = (2R)-3-phospho-glyceroyl phosphate + ADP. The protein operates within carbohydrate degradation; glycolysis; pyruvate from D-glyceraldehyde 3-phosphate: step 2/5. This chain is Phosphoglycerate kinase, found in Geobacter sp. (strain M21).